We begin with the raw amino-acid sequence, 442 residues long: D-serine dehydratase 2 (442 aa).

Lysine 118 carries the post-translational modification N6-(pyridoxal phosphate)lysine.

This sequence belongs to the serine/threonine dehydratase family. DsdA subfamily. As to quaternary structure, monomer. The cofactor is pyridoxal 5'-phosphate.

The catalysed reaction is D-serine = pyruvate + NH4(+). The sequence is that of D-serine dehydratase 2 from Escherichia coli O6:K15:H31 (strain 536 / UPEC).